The following is a 302-amino-acid chain: Oxygen-dependent coproporphyrinogen-III oxidase (302 aa).

S94 serves as a coordination point for substrate. Positions 98 and 108 each coordinate a divalent metal cation. H108 (proton donor) is an active-site residue. 110–112 (NVR) is a substrate binding site. Positions 147 and 177 each coordinate a divalent metal cation. Positions 242–277 (YVEFNLVWDRGTLFGLQSGGRTESILMSMPPLVRWE) are important for dimerization. Residue 260–262 (GGR) coordinates substrate.

Belongs to the aerobic coproporphyrinogen-III oxidase family. As to quaternary structure, homodimer. Requires a divalent metal cation as cofactor.

The protein localises to the cytoplasm. The catalysed reaction is coproporphyrinogen III + O2 + 2 H(+) = protoporphyrinogen IX + 2 CO2 + 2 H2O. It functions in the pathway porphyrin-containing compound metabolism; protoporphyrin-IX biosynthesis; protoporphyrinogen-IX from coproporphyrinogen-III (O2 route): step 1/1. In terms of biological role, involved in the heme biosynthesis. Catalyzes the aerobic oxidative decarboxylation of propionate groups of rings A and B of coproporphyrinogen-III to yield the vinyl groups in protoporphyrinogen-IX. This is Oxygen-dependent coproporphyrinogen-III oxidase from Chromobacterium violaceum (strain ATCC 12472 / DSM 30191 / JCM 1249 / CCUG 213 / NBRC 12614 / NCIMB 9131 / NCTC 9757 / MK).